The sequence spans 128 residues: uncharacterized protein (128 aa).

This is an uncharacterized protein from Mycoplasma genitalium (strain ATCC 33530 / DSM 19775 / NCTC 10195 / G37) (Mycoplasmoides genitalium).